The chain runs to 407 residues: Probable tRNA sulfurtransferase (407 aa).

The THUMP domain maps to 61-165 (NEITYRLSKI…LDAIYMYEEV (105 aa)). Residues 183–184 (ML), 208–209 (HF), arginine 265, glycine 287, and glutamine 296 each bind ATP.

This sequence belongs to the ThiI family.

It localises to the cytoplasm. The enzyme catalyses [ThiI sulfur-carrier protein]-S-sulfanyl-L-cysteine + a uridine in tRNA + 2 reduced [2Fe-2S]-[ferredoxin] + ATP + H(+) = [ThiI sulfur-carrier protein]-L-cysteine + a 4-thiouridine in tRNA + 2 oxidized [2Fe-2S]-[ferredoxin] + AMP + diphosphate. The catalysed reaction is [ThiS sulfur-carrier protein]-C-terminal Gly-Gly-AMP + S-sulfanyl-L-cysteinyl-[cysteine desulfurase] + AH2 = [ThiS sulfur-carrier protein]-C-terminal-Gly-aminoethanethioate + L-cysteinyl-[cysteine desulfurase] + A + AMP + 2 H(+). The protein operates within cofactor biosynthesis; thiamine diphosphate biosynthesis. Its function is as follows. Catalyzes the ATP-dependent transfer of a sulfur to tRNA to produce 4-thiouridine in position 8 of tRNAs, which functions as a near-UV photosensor. Also catalyzes the transfer of sulfur to the sulfur carrier protein ThiS, forming ThiS-thiocarboxylate. This is a step in the synthesis of thiazole, in the thiamine biosynthesis pathway. The sulfur is donated as persulfide by IscS. The protein is Probable tRNA sulfurtransferase of Staphylococcus aureus (strain N315).